The primary structure comprises 117 residues: MSNIIKQIEQEQMKQDVPSFRPGDNVEVKVWVVEGSKKRLQAFEGVVIAIRNRGLHSAFTVRKISNGEGVERVFQTHSPVVDSITVKRRGAVRKAKLYYLRERSGKAARIKERLNAK.

The protein belongs to the bacterial ribosomal protein bL19 family.

In terms of biological role, this protein is located at the 30S-50S ribosomal subunit interface and may play a role in the structure and function of the aminoacyl-tRNA binding site. This chain is Large ribosomal subunit protein bL19, found in Proteus mirabilis (strain HI4320).